The chain runs to 427 residues: Dihydroorotase (427 aa).

The Zn(2+) site is built by His-60 and His-62. Residues 62–64 (HFR) and Asn-94 each bind substrate. Residues Asp-152, His-179, and His-232 each contribute to the Zn(2+) site. Asn-278 contacts substrate. Asp-305 contacts Zn(2+). Asp-305 is an active-site residue. Substrate is bound by residues His-309 and 323–324 (FG).

It belongs to the metallo-dependent hydrolases superfamily. DHOase family. Class I DHOase subfamily. It depends on Zn(2+) as a cofactor.

The catalysed reaction is (S)-dihydroorotate + H2O = N-carbamoyl-L-aspartate + H(+). It participates in pyrimidine metabolism; UMP biosynthesis via de novo pathway; (S)-dihydroorotate from bicarbonate: step 3/3. Catalyzes the reversible cyclization of carbamoyl aspartate to dihydroorotate. This is Dihydroorotase from Enterococcus faecalis (strain ATCC 700802 / V583).